A 626-amino-acid chain; its full sequence is DNA primase (626 aa).

The segment at 39 to 63 (CPFHGEKTPSFSVSPEKQIFHCFGC) adopts a CHC2-type zinc-finger fold. Residues 264–346 (EEITLMEGFM…DVFVLQLPAG (83 aa)) form the Toprim domain. Mg(2+) contacts are provided by E270, D314, and D316.

This sequence belongs to the DnaG primase family. As to quaternary structure, monomer. Interacts with DnaB. Zn(2+) is required as a cofactor. It depends on Mg(2+) as a cofactor.

The enzyme catalyses ssDNA + n NTP = ssDNA/pppN(pN)n-1 hybrid + (n-1) diphosphate.. Its function is as follows. RNA polymerase that catalyzes the synthesis of short RNA molecules used as primers for DNA polymerase during DNA replication. The polypeptide is DNA primase (Listeria monocytogenes serovar 1/2a (strain ATCC BAA-679 / EGD-e)).